Here is a 472-residue protein sequence, read N- to C-terminus: Serralysin A (472 aa).

Positions 1–17 (MEKNLSSRDDDALHSLS) are excised as a propeptide. His-186 serves as a coordination point for Zn(2+). The active site involves Glu-187. Residues His-190 and Tyr-221 each contribute to the Zn(2+) site. Ca(2+) is bound by residues Arg-258, Gly-260, Thr-262, Asp-290, Gly-292, Gly-293, Thr-332, Glu-334, Gly-339, Gly-341, Asp-343, Asn-348, Ala-350, Asn-352, Gly-356, Gly-357, Ala-358, Gly-359, Asp-361, Gly-365, Gly-366, Gly-367, Gly-368, Asp-370, Gly-374, Gly-375, Gly-377, Asp-379, Asp-388, Asp-395, and Asp-405. Hemolysin-type calcium-binding repeat units follow at residues 337–354 (IGGS…DNIL) and 355–372 (RGGA…ADRL).

This sequence belongs to the peptidase M10B family. Ca(2+) is required as a cofactor. The cofactor is Zn(2+).

It localises to the secreted. The enzyme catalyses Preferential cleavage of bonds with hydrophobic residues in P1'.. This Dickeya chrysanthemi (Pectobacterium chrysanthemi) protein is Serralysin A (prtA).